The primary structure comprises 218 residues: Adenylate kinase (218 aa).

10–15 is an ATP binding site; that stretch reads GAGKGT. An NMP region spans residues 30 to 59; it reads STGDMLRAAVKAGTPLGIEAKKVMDSGGLV. Residues Thr-31, Arg-36, 57–59, 85–88, and Gln-92 contribute to the AMP site; these read GLV and GFPR. The LID stretch occupies residues 122-159; that stretch reads GRRSHSASGRTYHVKYNPPKVEGLDDVTGEPLIQREDD. ATP-binding positions include Arg-123 and 132-133; that span reads TY. AMP is bound by residues Arg-156 and Arg-167. Gly-203 contacts ATP.

The protein belongs to the adenylate kinase family. In terms of assembly, monomer.

It is found in the cytoplasm. The catalysed reaction is AMP + ATP = 2 ADP. The protein operates within purine metabolism; AMP biosynthesis via salvage pathway; AMP from ADP: step 1/1. Catalyzes the reversible transfer of the terminal phosphate group between ATP and AMP. Plays an important role in cellular energy homeostasis and in adenine nucleotide metabolism. This Polaromonas naphthalenivorans (strain CJ2) protein is Adenylate kinase.